We begin with the raw amino-acid sequence, 349 residues long: Biotin synthase (349 aa).

Residues 1 to 11 (MLEGIEREAAE) are compositionally biased toward basic and acidic residues. Residues 1-30 (MLEGIEREAAEHSNGCSGPAGHAPPAGAPR) are disordered. Positions 64–283 (HEVQLCTLLS…IAVARVMMPR (220 aa)) constitute a Radical SAM core domain. [4Fe-4S] cluster-binding residues include Cys79, Cys83, and Cys86. [2Fe-2S] cluster is bound by residues Cys123, Cys155, Cys215, and Arg287.

It belongs to the radical SAM superfamily. Biotin synthase family. In terms of assembly, homodimer. [4Fe-4S] cluster is required as a cofactor. It depends on [2Fe-2S] cluster as a cofactor.

It catalyses the reaction (4R,5S)-dethiobiotin + (sulfur carrier)-SH + 2 reduced [2Fe-2S]-[ferredoxin] + 2 S-adenosyl-L-methionine = (sulfur carrier)-H + biotin + 2 5'-deoxyadenosine + 2 L-methionine + 2 oxidized [2Fe-2S]-[ferredoxin]. It participates in cofactor biosynthesis; biotin biosynthesis; biotin from 7,8-diaminononanoate: step 2/2. Its function is as follows. Catalyzes the conversion of dethiobiotin (DTB) to biotin by the insertion of a sulfur atom into dethiobiotin via a radical-based mechanism. This chain is Biotin synthase, found in Sorangium cellulosum (strain So ce56) (Polyangium cellulosum (strain So ce56)).